Consider the following 297-residue polypeptide: Malonyl-[acyl-carrier protein] O-methyltransferase (297 aa).

Belongs to the methyltransferase superfamily.

The catalysed reaction is malonyl-[ACP] + S-adenosyl-L-methionine = malonyl-[ACP] methyl ester + S-adenosyl-L-homocysteine. Its pathway is cofactor biosynthesis; biotin biosynthesis. Functionally, converts the free carboxyl group of a malonyl-thioester to its methyl ester by transfer of a methyl group from S-adenosyl-L-methionine (SAM). It allows to synthesize pimeloyl-ACP via the fatty acid synthetic pathway. The polypeptide is Malonyl-[acyl-carrier protein] O-methyltransferase (Laribacter hongkongensis (strain HLHK9)).